The primary structure comprises 167 residues: Large ribosomal subunit protein bL9 (167 aa).

The protein belongs to the bacterial ribosomal protein bL9 family.

Functionally, binds to the 23S rRNA. In Chlamydia trachomatis serovar L2 (strain ATCC VR-902B / DSM 19102 / 434/Bu), this protein is Large ribosomal subunit protein bL9.